Here is a 777-residue protein sequence, read N- to C-terminus: Gliding motility regulatory protein (777 aa).

Residues 1-108 enclose the HPt domain; it reads MDTEALKKSL…SDLNEDLSGA (108 aa). At His-49 the chain carries Phosphohistidine; by autocatalysis. Disordered regions lie at residues 129 to 149 and 164 to 212; these read TPPA…PPAP and PAPV…KSAV. Pro residues-rich tracts occupy residues 139-149 and 164-177; these read VAPPPAPPPAP and PAPV…PPTQ. A compositionally biased stretch (low complexity) spans 178-197; it reads APVAEPGAHAAAAAPHPAAA. The Histidine kinase domain maps to 270–509; it reads DISNEVREQL…TITLRLPQSL (240 aa). The 135-residue stretch at 511–645 folds into the CheW-like domain; that stretch reads LMKVLLVRLG…VPDIMAEVRR (135 aa). The Response regulatory domain maps to 660–776; that stretch reads RVLLVDDSPI…EVLAQAIDRL (117 aa). At Asp-709 the chain carries 4-aspartylphosphate.

The enzyme catalyses ATP + protein L-histidine = ADP + protein N-phospho-L-histidine.. Functionally, frzE is involved in a sensory transduction pathway that controls the frequency at which cells reverse their gliding direction. FrzE seems to be capable of autophosphorylating itself on a histidine residue and then to transfer that group to an aspartate residue in the C-terminal part of the protein. The sequence is that of Gliding motility regulatory protein (frzE) from Myxococcus xanthus.